Consider the following 291-residue polypeptide: tRNA N(3)-cytidine methyltransferase METTL8, mitochondrial (291 aa).

Residues 1–21 (MNMIWRNSISCLRLGKVPHRY) constitute a mitochondrion transit peptide. Lys-80 is covalently cross-linked (Glycyl lysine isopeptide (Lys-Gly) (interchain with G-Cter in SUMO)). Trp-89 and Tyr-93 together coordinate S-adenosyl-L-methionine. Residues 141–187 (FSRMHCPTVPDEKNHYEKSSGSSEGQSKTESDFSNLDSEKHKKGPME) form a disordered region. A compositionally biased stretch (low complexity) spans 159–168 (SSGSSEGQSK). 3 residues coordinate S-adenosyl-L-methionine: Gly-204, Asp-230, and Asp-256.

It belongs to the methyltransferase superfamily. METL family. Interacts with EP300.

It localises to the mitochondrion. The enzyme catalyses cytidine(32) in tRNA(Ser) + S-adenosyl-L-methionine = N(3)-methylcytidine(32) in tRNA(Ser) + S-adenosyl-L-homocysteine + H(+). It carries out the reaction cytidine(32) in tRNA(Thr) + S-adenosyl-L-methionine = N(3)-methylcytidine(32) in tRNA(Thr) + S-adenosyl-L-homocysteine + H(+). It catalyses the reaction a cytidine in mRNA + S-adenosyl-L-methionine = an N(3)-methylcytidine in mRNA + S-adenosyl-L-homocysteine + H(+). In terms of biological role, mitochondrial S-adenosyl-L-methionine-dependent methyltransferase that mediates N(3)-methylcytidine modification of residue 32 of the tRNA anticodon loop of mitochondrial tRNA(Ser)(UCN) and tRNA(Thr). N(3)-methylcytidine methylation modification regulates mitochondrial translation efficiency and is required for activity of the respiratory chain. N(3)-methylcytidine methylation of mitochondrial tRNA(Ser)(UCN) requires the formation of N(6)-dimethylallyladenosine(37) (i6A37) by TRIT1 as prerequisite. May also mediate N(3)-methylcytidine modification of mRNAs. The existence of N(3)-methylcytidine modification on mRNAs is however unclear, and additional evidences are required to confirm the role of the N(3)-methylcytidine-specific mRNA methyltransferase activity of METTL8 in vivo. This is tRNA N(3)-cytidine methyltransferase METTL8, mitochondrial from Homo sapiens (Human).